A 93-amino-acid polypeptide reads, in one-letter code: Small ribosomal subunit protein uS19 (93 aa).

It belongs to the universal ribosomal protein uS19 family.

Functionally, protein S19 forms a complex with S13 that binds strongly to the 16S ribosomal RNA. This Latilactobacillus sakei subsp. sakei (strain 23K) (Lactobacillus sakei subsp. sakei) protein is Small ribosomal subunit protein uS19.